Reading from the N-terminus, the 748-residue chain is Proton-associated sugar transporter A (748 aa).

The next 6 membrane-spanning stretches (helical) occupy residues 93-113 (ILFGIEFSYAMETAYVTPVLL), 123-143 (SLVWFISPILGFLLQPLLGAW), 155-175 (RPFILVLAIGALLGLSLLLNG), 191-211 (WGLLLTVCGVVLMDFSADSAD), 233-253 (IHALLAGLGGGFGYVVGGIHW), and 268-288 (VIYLFTAVTLSVTTVLTLVSI). The disordered stretch occupies residues 294–339 (RPPSEKRAAMKSPSLPLPPSPPVLPEEGPGDSLPSHTATNFSSPIS). A compositionally biased stretch (pro residues) spans 308–317 (LPLPPSPPVL). Phosphothreonine is present on T497. The next 6 membrane-spanning stretches (helical) occupy residues 533–553 (GWLSFEGMLLFYTDFMGEVVF), 573–593 (VTMGCWGMCIYAFSAAFYSAI), 600–620 (FLSVRTLYFIAYLAFGLGTGL), 627–647 (LYVVLSLCITYGILFSTLCTL), 685–705 (FLAQILVSLVLGPLTSAVGSA), and 708–728 (VMYFSSLVSFLGCLYSSLFVI).

It belongs to the glycoside-pentoside-hexuronide (GPH) cation symporter transporter (TC 2.A.2) family. In terms of tissue distribution, expressed in adult heart, brain, muscle and kidney, with very strong expression in brain. Also expressed in fetal brain, kidney and lung.

The protein localises to the membrane. The catalysed reaction is D-galactose(in) + H(+)(in) = D-galactose(out) + H(+)(out). The enzyme catalyses D-glucose(out) + H(+)(out) = D-glucose(in) + H(+)(in). Functionally, proton-associated glucose transporter in the brain. This is Proton-associated sugar transporter A from Homo sapiens (Human).